Here is a 969-residue protein sequence, read N- to C-terminus: Vacuolar membrane protease (969 aa).

The Cytoplasmic portion of the chain corresponds to 1 to 12 (MTRVNSIIGFRP). Residues 13 to 33 (IPVTLLTVITYVSLFSALLFI) form a helical membrane-spanning segment. Residues 34–381 (DRQPPAVAKK…RAFSVLHLHT (348 aa)) lie on the Vacuolar side of the membrane. Asparagine 125 is a glycosylation site (N-linked (GlcNAc...) asparagine). 2 residues coordinate Zn(2+): histidine 166 and aspartate 178. Glutamate 216 (proton acceptor) is an active-site residue. Positions 217, 242, and 315 each coordinate Zn(2+). N-linked (GlcNAc...) asparagine glycosylation is present at asparagine 355. A helical transmembrane segment spans residues 382–402 (IFAFTITLIVVPFVVVLVAMW). Residues 403–438 (ALGHFDKLYFFSNTAYIPPPPEHSIASRTTQGWRGV) lie on the Cytoplasmic side of the membrane. Residues 439-459 (LRFPVAFVAASAGVVGMAFLI) form a helical membrane-spanning segment. The Vacuolar portion of the chain corresponds to 460 to 469 (NKINPMVVYA). Residues 470–490 (SQYTVWTCFLSTWWIIAWVIL) form a helical membrane-spanning segment. Residues 491–505 (RGADAVRPTALARGY) are Cytoplasmic-facing. A helical transmembrane segment spans residues 506 to 526 (GFLEQWLLWLVAMIGVAISIG). Residues 527 to 531 (KSHLG) are Vacuolar-facing. Residues 532 to 552 (SGYWVLVFYSGFFTSAFISLL) form a helical membrane-spanning segment. At 553-662 (EMAALQKKSE…WSKDLPSWTW (110 aa)) the chain is on the cytoplasmic side. The segment at 571–629 (DQAYPPEEHSQTGASGNISNRAANDDDDAGEHATEETPLFRGPNRPLSFAPHRNPRYDN) is disordered. Positions 581–592 (QTGASGNISNRA) are enriched in polar residues. The helical transmembrane segment at 663 to 683 (ILQFLATVPLQLVLAGSVALL) threads the bilayer. Residues 684–698 (LGNALAQTGADGSDM) are Vacuolar-facing. Residues 699 to 719 (LTVLLGFGVFSIILLLPVAPF) form a helical membrane-spanning segment. At 720–727 (LHRITYHV) the chain is on the cytoplasmic side. The chain crosses the membrane as a helical span at residues 728–748 (TLFIFVIFVGTFIYNLAAPPF). The Vacuolar portion of the chain corresponds to 749–969 (SPNARLKVYF…LVEGSVPFMI (221 aa)). An N-linked (GlcNAc...) asparagine glycan is attached at asparagine 840.

It belongs to the peptidase M28 family. It depends on Zn(2+) as a cofactor.

It is found in the vacuole membrane. In terms of biological role, may be involved in vacuolar sorting and osmoregulation. In Tuber melanosporum (strain Mel28) (Perigord black truffle), this protein is Vacuolar membrane protease.